The sequence spans 149 residues: UPF0178 protein Lmo1456 (149 aa).

This sequence belongs to the UPF0178 family.

The chain is UPF0178 protein Lmo1456 from Listeria monocytogenes serovar 1/2a (strain ATCC BAA-679 / EGD-e).